Here is a 609-residue protein sequence, read N- to C-terminus: MKVNSTTEIIKSLLECLSKEISNGEDEDTMITDITELFNLSKEFDVRKEISNKHNEFLNILMNYIIKSTTANGDNNEKLFKFNLTSIRFLRNLCANVSENQNIIISNSNFINFIINQLINENNNIKITLNKKNILTSLYQLLINGIVLNDKTQSLLWSNIYPNNLIILIEKYKDNDEFKLLPTNLMLIYNCILNSKDRMKDLVCNKRLVQLIIELIKEDDTFDHEYNTQNFHWIHLISKSLFINDLFIDLYKSLSDNKYSTELVKSTTESTTESTTTESTDSTTDSTTTTTTGKTNKNQVKLLNLLDSIIHDGDKKNIKEYIEKDSIIDLKTCYFMIDELASLYNLDFARKDLKVETQQLTTSLNQSDFDAIFFFIKIFANITSYTEEMLSLSLSIFKPNQIPTKQQEGEEDPVNQILNDPFSKDSAIDPSASKKFDLNTLLRKKGLVAICIGSLHGNYGSDTNKSSSSSSSSSSSTTTDGETVTSKGFNKNIESQDKGFKIELIRILGNLSYKNRGNQDEIRELGGIEIILNHCRFDVNNPYIKEWSVFAIRNLCEDNVENQNLIESLKVKGVANNDELKDLGLEVGVTENGTIKFKNVPKKEKENNQ.

3 disordered regions span residues 265–293 (KSTTESTTESTTTESTDSTTDSTTTTTTG), 405–426 (KQQEGEEDPVNQILNDPFSKDS), and 461–490 (SDTNKSSSSSSSSSSSTTTDGETVTSKGFN). Low complexity predominate over residues 266-292 (STTESTTESTTTESTDSTTDSTTTTTT). The span at 466–479 (SSSSSSSSSSSTTT) shows a compositional bias: low complexity. Positions 480–490 (DGETVTSKGFN) are enriched in polar residues.

This sequence belongs to the ATXN10 family.

In terms of biological role, may play a role in the regulation of cytokinesis. This Dictyostelium discoideum (Social amoeba) protein is Ataxin-10 homolog (atxn10).